Consider the following 286-residue polypeptide: ATP synthase gamma chain (286 aa).

Belongs to the ATPase gamma chain family. As to quaternary structure, F-type ATPases have 2 components, CF(1) - the catalytic core - and CF(0) - the membrane proton channel. CF(1) has five subunits: alpha(3), beta(3), gamma(1), delta(1), epsilon(1). CF(0) has three main subunits: a, b and c.

It is found in the cell inner membrane. In terms of biological role, produces ATP from ADP in the presence of a proton gradient across the membrane. The gamma chain is believed to be important in regulating ATPase activity and the flow of protons through the CF(0) complex. The polypeptide is ATP synthase gamma chain (Pseudomonas entomophila (strain L48)).